We begin with the raw amino-acid sequence, 464 residues long: Cysteine--tRNA ligase (464 aa).

Cys32 contacts Zn(2+). The 'HIGH' region signature appears at Val34 to His44. Zn(2+)-binding residues include Cys213, His238, and Glu242. Positions Lys270–Ser274 match the 'KMSKS' region motif. Residue Lys273 coordinates ATP.

Belongs to the class-I aminoacyl-tRNA synthetase family. As to quaternary structure, monomer. It depends on Zn(2+) as a cofactor.

The protein resides in the cytoplasm. The enzyme catalyses tRNA(Cys) + L-cysteine + ATP = L-cysteinyl-tRNA(Cys) + AMP + diphosphate. The protein is Cysteine--tRNA ligase of Francisella tularensis subsp. tularensis (strain SCHU S4 / Schu 4).